Consider the following 366-residue polypeptide: Aminomethyltransferase (366 aa).

Belongs to the GcvT family. In terms of assembly, the glycine cleavage system is composed of four proteins: P, T, L and H.

The enzyme catalyses N(6)-[(R)-S(8)-aminomethyldihydrolipoyl]-L-lysyl-[protein] + (6S)-5,6,7,8-tetrahydrofolate = N(6)-[(R)-dihydrolipoyl]-L-lysyl-[protein] + (6R)-5,10-methylene-5,6,7,8-tetrahydrofolate + NH4(+). The glycine cleavage system catalyzes the degradation of glycine. The protein is Aminomethyltransferase of Neisseria meningitidis serogroup A / serotype 4A (strain DSM 15465 / Z2491).